The chain runs to 34 residues: GCDLSTCATHNLVNELNKFDKSKPSSGGVGPESP.

An intrachain disulfide couples C2 to C7. A Proline amide modification is found at P34.

This Odorrana schmackeri (Schmacker's frog) protein is Calcitonin-like peptide 1.